The primary structure comprises 500 residues: UDP-N-acetylmuramoyl-L-alanyl-D-glutamate--2,6-diaminopimelate ligase (500 aa).

Residues Leu26, Ser28, and 43–45 (HQV) each bind UDP-N-acetyl-alpha-D-muramoyl-L-alanyl-D-glutamate. ATP is bound at residue 123 to 129 (GTNGKTT). UDP-N-acetyl-alpha-D-muramoyl-L-alanyl-D-glutamate is bound by residues Asn164, 165-166 (TT), Ser192, Gln198, and Arg200. The residue at position 232 (Lys232) is an N6-carboxylysine. Meso-2,6-diaminopimelate-binding positions include Arg399, 423 to 426 (DNPR), Gly474, and Glu478. A Meso-diaminopimelate recognition motif motif is present at residues 423–426 (DNPR).

It belongs to the MurCDEF family. MurE subfamily. It depends on Mg(2+) as a cofactor. In terms of processing, carboxylation is probably crucial for Mg(2+) binding and, consequently, for the gamma-phosphate positioning of ATP.

The protein resides in the cytoplasm. The catalysed reaction is UDP-N-acetyl-alpha-D-muramoyl-L-alanyl-D-glutamate + meso-2,6-diaminopimelate + ATP = UDP-N-acetyl-alpha-D-muramoyl-L-alanyl-gamma-D-glutamyl-meso-2,6-diaminopimelate + ADP + phosphate + H(+). The protein operates within cell wall biogenesis; peptidoglycan biosynthesis. Functionally, catalyzes the addition of meso-diaminopimelic acid to the nucleotide precursor UDP-N-acetylmuramoyl-L-alanyl-D-glutamate (UMAG) in the biosynthesis of bacterial cell-wall peptidoglycan. The polypeptide is UDP-N-acetylmuramoyl-L-alanyl-D-glutamate--2,6-diaminopimelate ligase (Actinobacillus pleuropneumoniae serotype 5b (strain L20)).